We begin with the raw amino-acid sequence, 267 residues long: Large ribosomal subunit protein mL57 (267 aa).

Residues 43–54 show a composition bias toward low complexity; the sequence is SSSAVQQEQDAS. The segment at 43 to 73 is disordered; it reads SSSAVQQEQDASGTSSSQQPRPRWSYTPERM.

The protein belongs to the ribonuclease III family. Mitochondrion-specific ribosomal protein mL57 subfamily. In terms of assembly, component of the mitochondrial large ribosomal subunit (mt-LSU). Mature N.crassa 74S mitochondrial ribosomes consist of a small (37S) and a large (54S) subunit. The 37S small subunit contains a 16S ribosomal RNA (16S mt-rRNA) and 32 different proteins. The 54S large subunit contains a 23S rRNA (23S mt-rRNA) and 42 different proteins. mL57 forms a heterodimer with mL44 and stabilizes rRNA expansion segments 1/2 at a membrane-facing protuberance close to the point of attachment of the ribosome to the translocon in the membrane.

The protein localises to the mitochondrion. Its function is as follows. Component of the mitochondrial ribosome (mitoribosome), a dedicated translation machinery responsible for the synthesis of mitochondrial genome-encoded proteins, including at least some of the essential transmembrane subunits of the mitochondrial respiratory chain. The mitoribosomes are attached to the mitochondrial inner membrane and translation products are cotranslationally integrated into the membrane. This is Large ribosomal subunit protein mL57 (mrpl15) from Neurospora crassa (strain ATCC 24698 / 74-OR23-1A / CBS 708.71 / DSM 1257 / FGSC 987).